The sequence spans 238 residues: Phosphoribosylaminoimidazole-succinocarboxamide synthase (238 aa).

The protein belongs to the SAICAR synthetase family.

The enzyme catalyses 5-amino-1-(5-phospho-D-ribosyl)imidazole-4-carboxylate + L-aspartate + ATP = (2S)-2-[5-amino-1-(5-phospho-beta-D-ribosyl)imidazole-4-carboxamido]succinate + ADP + phosphate + 2 H(+). The protein operates within purine metabolism; IMP biosynthesis via de novo pathway; 5-amino-1-(5-phospho-D-ribosyl)imidazole-4-carboxamide from 5-amino-1-(5-phospho-D-ribosyl)imidazole-4-carboxylate: step 1/2. This is Phosphoribosylaminoimidazole-succinocarboxamide synthase from Desulfitobacterium hafniense (strain DSM 10664 / DCB-2).